Reading from the N-terminus, the 242-residue chain is N-alpha-acetyltransferase 60 (242 aa).

The Cytoplasmic segment spans residues 1–192 (MTEVVPSSAL…GGHPPWTILD (192 aa)). The 170-residue stretch at 13–182 (VSLRLLCHDD…DGFTYVLYIN (170 aa)) folds into the N-acetyltransferase domain. Residue Y38 coordinates substrate. K79 carries the post-translational modification N6-acetyllysine; by autocatalysis. The active site involves Y97. L99 serves as a coordination point for substrate. Acetyl-CoA is bound at residue 101 to 103 (LGV). K105, K109, and K121 each carry N6-acetyllysine; by autocatalysis. 109–114 (KHGIGS) is a binding site for acetyl-CoA. Residue H138 is part of the active site. Acetyl-CoA is bound by residues N143 and 150–153 (YENR). The required for homodimerization stretch occupies residues 162–173 (PYYYSIRGVLKD). Residue Y165 participates in substrate binding. The helical intramembrane region spans 193-236 (YIQHLGSALANLSPCSIPHRIYRQAHSLLCSFLPWSSISSKGGI). Over 237–242 (EYSRTM) the chain is Cytoplasmic.

Belongs to the acetyltransferase family. NAA60 subfamily. Monomer and homodimer; monomer in presence of substrate and homodimer in its absence. Post-translationally, acetylated: autoacetylation is required for optimal acetyltransferase activity.

It localises to the golgi apparatus membrane. The catalysed reaction is N-terminal L-methionyl-[transmembrane protein] + acetyl-CoA = N-terminal N(alpha)-acetyl-L-methionyl-[transmembrane protein] + CoA + H(+). It carries out the reaction L-lysyl-[protein] + acetyl-CoA = N(6)-acetyl-L-lysyl-[protein] + CoA + H(+). N-alpha-acetyltransferase that specifically mediates the acetylation of N-terminal residues of the transmembrane proteins, with a strong preference for N-termini facing the cytosol. Displays N-terminal acetyltransferase activity towards a range of N-terminal sequences including those starting with Met-Lys, Met-Val, Met-Ala and Met-Met. Required for normal chromosomal segregation during anaphase. May also show histone acetyltransferase activity; such results are however unclear in vivo and would require additional experimental evidences. In Rattus norvegicus (Rat), this protein is N-alpha-acetyltransferase 60 (Naa60).